Reading from the N-terminus, the 156-residue chain is Ribonuclease H (156 aa).

Residues 3–144 enclose the RNase H type-1 domain; sequence ERKLIHIFTD…CDILARSAAE (142 aa). Residues Asp-12, Glu-50, Asp-72, and Asp-136 each contribute to the Mg(2+) site.

Belongs to the RNase H family. In terms of assembly, monomer. Mg(2+) is required as a cofactor.

It is found in the cytoplasm. The catalysed reaction is Endonucleolytic cleavage to 5'-phosphomonoester.. Endonuclease that specifically degrades the RNA of RNA-DNA hybrids. This chain is Ribonuclease H, found in Shewanella putrefaciens (strain CN-32 / ATCC BAA-453).